We begin with the raw amino-acid sequence, 264 residues long: 3-dehydroquinate dehydratase (264 aa).

Residues 50-52 and Arg-86 contribute to the 3-dehydroquinate site; that span reads EWR. His-148 functions as the Proton donor/acceptor in the catalytic mechanism. The active-site Schiff-base intermediate with substrate is Lys-175. 3-dehydroquinate-binding residues include Arg-217, Ser-236, and Gln-240.

This sequence belongs to the type-I 3-dehydroquinase family. In terms of assembly, homodimer.

The catalysed reaction is 3-dehydroquinate = 3-dehydroshikimate + H2O. The protein operates within metabolic intermediate biosynthesis; chorismate biosynthesis; chorismate from D-erythrose 4-phosphate and phosphoenolpyruvate: step 3/7. Its function is as follows. Involved in the third step of the chorismate pathway, which leads to the biosynthesis of aromatic amino acids. Catalyzes the cis-dehydration of 3-dehydroquinate (DHQ) and introduces the first double bond of the aromatic ring to yield 3-dehydroshikimate. The sequence is that of 3-dehydroquinate dehydratase from Albidiferax ferrireducens (strain ATCC BAA-621 / DSM 15236 / T118) (Rhodoferax ferrireducens).